The primary structure comprises 128 residues: MTEYTPDEKLRLHQLRKLRRRWLKDQELSHREPVLPPQKMGPMEKFWNTFLENKSPWRKMVHGVYQKSIFVFTHILVPAWIIHYYMKYHVSEKPYGIVETKPRIFPGDTILETGEVIPPMKEFPDQHH.

At Thr2 the chain carries N-acetylthreonine. Lys24 is subject to N6-acetyllysine. Residues 68–86 (SIFVFTHILVPAWIIHYYM) form a helical membrane-spanning segment.

This sequence belongs to the complex I NDUFB6 subunit family. In terms of assembly, complex I is composed of 45 different subunits.

It localises to the mitochondrion inner membrane. Functionally, accessory subunit of the mitochondrial membrane respiratory chain NADH dehydrogenase (Complex I), that is believed not to be involved in catalysis. Complex I functions in the transfer of electrons from NADH to the respiratory chain. The immediate electron acceptor for the enzyme is believed to be ubiquinone. This Pongo abelii (Sumatran orangutan) protein is NADH dehydrogenase [ubiquinone] 1 beta subcomplex subunit 6 (NDUFB6).